Consider the following 200-residue polypeptide: Large ribosomal subunit protein uL29 (200 aa).

The large ribosomal subunit protein uL29 stretch occupies residues 1-107; that stretch reads MTIAKELKQK…KQETKKAEVK (107 aa). The segment at 92 to 200 is disordered; it reads STKPESKQET…KMIKTKEKKQ (109 aa). Residues 93-179 show a composition bias toward basic and acidic residues; it reads TKPESKQETK…QEVKKVEAKK (87 aa). The interval 108-200 is unknown; that stretch reads PKVESKPESK…KMIKTKEKKQ (93 aa). The span at 186 to 200 shows a compositional bias: basic residues; sequence KPVKAKMIKTKEKKQ.

This sequence belongs to the universal ribosomal protein uL29 family.

This Mycoplasma genitalium (strain ATCC 33530 / DSM 19775 / NCTC 10195 / G37) (Mycoplasmoides genitalium) protein is Large ribosomal subunit protein uL29.